A 21-amino-acid chain; its full sequence is thr operon leader peptide (21 aa).

It belongs to the thr operon leader peptide family.

In terms of biological role, this protein is involved in control of the biosynthesis of threonine. The polypeptide is thr operon leader peptide (Salmonella choleraesuis (strain SC-B67)).